A 376-amino-acid polypeptide reads, in one-letter code: MPVKLKWPWLGIAIPSFLIASIGYCAHYFILLNFLSLRKQLWYQFCQTMIWLSYYLAIYTPPGKPPTNFKPSKNEWKVYCKKCKCYKPERSHHCKTCNQCVLMMDHHCPWTMNCVGYNNFPHFIRFLFWVIVGTTSLAIFLTTRIHSIWVHRSSPSYLYYKSELIFLTILTPLNAFILLTISILMIRCLFNQIFNGRSQIESWEMDRLETLARMSKLLPILIENVWYIFPNLRNEHVESQAEALLNKKRLSLDELVNFPYDLGPFRNAIQLLGTPPLWLYPFSGPQDDGLHFQKNEESMIEDPNSLNDIILCLPWPPDSTKHLNSTSEHTSNVQIISEEGEQVIRIRTPEKKLSRSEWLNDWGESLEDFGVDVDVE.

Over methionine 1–glycine 11 the chain is Cytoplasmic. Residues isoleucine 12–leucine 32 form a helical membrane-spanning segment. At asparagine 33–glutamine 40 the chain is on the lumenal side. A helical membrane pass occupies residues leucine 41–proline 61. Residues proline 62–histidine 122 are Cytoplasmic-facing. Positions valine 78–phenylalanine 128 constitute a DHHC domain. The active-site S-palmitoyl cysteine intermediate is cysteine 108. Residues phenylalanine 123–threonine 143 traverse the membrane as a helical segment. Topologically, residues arginine 144–glutamate 163 are lumenal. Residues leucine 164 to leucine 184 form a helical membrane-spanning segment. Residues methionine 185 to glutamate 376 are Cytoplasmic-facing.

Belongs to the DHHC palmitoyltransferase family. PFA4 subfamily.

Its subcellular location is the endoplasmic reticulum membrane. The catalysed reaction is L-cysteinyl-[protein] + hexadecanoyl-CoA = S-hexadecanoyl-L-cysteinyl-[protein] + CoA. Mediates the reversible addition of palmitate to target proteins, thereby regulating their membrane association and biological function. In Candida glabrata (strain ATCC 2001 / BCRC 20586 / JCM 3761 / NBRC 0622 / NRRL Y-65 / CBS 138) (Yeast), this protein is Palmitoyltransferase PFA4.